Consider the following 239-residue polypeptide: Prolyl hydroxylase EGLN3 (239 aa).

The interval 62–73 is beta(2)beta(3) 'finger-like' loop; the sequence is AGPRAGVSKRHL. The segment at 88–104 is required for interaction with ADRB2; that stretch reads CEAINFLLSLIDRLVLY. One can recognise a Fe2OG dioxygenase domain in the interval 116–214; sequence ERSKAMVACY…RYAMTVWYFD (99 aa). His135, Asp137, and His196 together coordinate Fe cation. Arg205 provides a ligand contact to 2-oxoglutarate.

As to quaternary structure, interacts with ADRB2; the interaction hydroxylates ADRB2 facilitating its ubiquitination by the VHL-E3 ligase complex. Interacts with PAX2; the interaction targets PAX2 for destruction. Interacts with PKM; the interaction hydroxylates PKM in hypoxia. Interacts with WDR83; the interaction leads to almost complete elimination of HIF-mediated reporter activity. Interacts with BCL2 (via its BH4 domain); the interaction disrupts the BAX-BCL4 complex inhibiting the anti-apoptotic activity of BCL2. It depends on Fe(2+) as a cofactor. The cofactor is L-ascorbate. In terms of processing, ubiquitinated by SIAH1 and/or SIAH2 in response to the unfolded protein response (UPR), leading to its degradation. Highly expressed in vascular smooth muscle. Moderately expressed in esophagus, stomach, small bowel and aorta. Low levels in tail and kidney. Expression also in pheochromocytoma cell line PC-12.

Its subcellular location is the nucleus. It localises to the cytoplasm. It carries out the reaction L-prolyl-[protein] + 2-oxoglutarate + O2 = trans-4-hydroxy-L-prolyl-[protein] + succinate + CO2. The enzyme catalyses L-prolyl-[hypoxia-inducible factor alpha subunit] + 2-oxoglutarate + O2 = trans-4-hydroxy-L-prolyl-[hypoxia-inducible factor alpha subunit] + succinate + CO2. In terms of biological role, prolyl hydroxylase that mediates hydroxylation of proline residues in target proteins, such as PKM, TELO2, ATF4 and HIF1A. Target proteins are preferentially recognized via a LXXLAP motif. Cellular oxygen sensor that catalyzes, under normoxic conditions, the post-translational formation of 4-hydroxyproline in hypoxia-inducible factor (HIF) alpha proteins. Hydroxylates a specific proline found in each of the oxygen-dependent degradation (ODD) domains (N-terminal, NODD, and C-terminal, CODD) of HIF1A. Also hydroxylates HIF2A. Has a preference for the CODD site for both HIF1A and HIF2A. Hydroxylation on the NODD site by EGLN3 appears to require prior hydroxylation on the CODD site. Hydroxylated HIFs are then targeted for proteasomal degradation via the von Hippel-Lindau ubiquitination complex. Under hypoxic conditions, the hydroxylation reaction is attenuated allowing HIFs to escape degradation resulting in their translocation to the nucleus, heterodimerization with HIF1B, and increased expression of hypoxy-inducible genes. ELGN3 is the most important isozyme in limiting physiological activation of HIFs (particularly HIF2A) in hypoxia. Also hydroxylates PKM in hypoxia, limiting glycolysis. Under normoxia, hydroxylates and regulates the stability of ADRB2. Regulator of cardiomyocyte and neuronal apoptosis. In cardiomyocytes, inhibits the anti-apoptotic effect of BCL2 by disrupting the BAX-BCL2 complex. In neurons, has a NGF-induced proapoptotic effect, probably through regulating CASP3 activity. Also essential for hypoxic regulation of neutrophilic inflammation. Plays a crucial role in DNA damage response (DDR) by hydroxylating TELO2, promoting its interaction with ATR which is required for activation of the ATR/CHK1/p53 pathway. Also mediates hydroxylation of ATF4, leading to decreased protein stability of ATF4. This chain is Prolyl hydroxylase EGLN3 (Egln3), found in Rattus norvegicus (Rat).